The sequence spans 474 residues: MFS transporter SAT21 (474 aa).

6 consecutive transmembrane segments (helical) span residues 7-27 (LVLP…LEVP), 64-84 (LVVG…ILYF), 101-121 (CVGY…HQVF), 131-151 (LFLF…AFVA), 162-182 (FLFL…ALAT), and 189-209 (LFLP…LLQM). A disordered region spans residues 220 to 252 (KVVGSTSDQTEPFLRSSSNSSQESGTAAPAIDP). Residues 222–244 (VGSTSDQTEPFLRSSSNSSQESG) show a composition bias toward polar residues. Asparagine 238 carries an N-linked (GlcNAc...) asparagine glycan. The next 6 helical transmembrane spans lie at 276-296 (FICY…AFIF), 315-335 (LALS…ANAT), 346-366 (INIG…IMAW), 374-394 (FIFS…LQGV), 406-426 (SIFA…GPLM), and 445-465 (FLAS…LWAL).

The protein belongs to the major facilitator superfamily.

It localises to the cell membrane. Its function is as follows. MFS transporter; part of the satratoxin SC3 cluster involved in the biosynthesis of satratoxins, trichothecene mycotoxins that are associated with human food poisonings. Satratoxins are suggested to be made by products of multiple gene clusters (SC1, SC2 and SC3) that encode 21 proteins in all, including polyketide synthases, acetyltransferases, and other enzymes expected to modify the trichothecene skeleton. SC1 encodes 10 proteins, SAT1 to SAT10. The largest are SAT8, which encodes a putative polyketide synthase (PKS) with a conventional non-reducing architecture, and SAT10, a putative protein containing four ankyrin repeats and thus may be involved in protein scaffolding. The putative short-chain reductase SAT3 may assist the PKS in some capacity. SAT6 contains a secretory lipase domain and acts probably as a trichothecene esterase. SAT5 encodes a putative acetyltransferase, and so, with SAT6, may affect endogenous protection from toxicity. The probable transcription factor SAT9 may regulate the expression of the SC1 cluster. SC2 encodes proteins SAT11 to SAT16, the largest of which encodes the putative reducing PKS SAT13. SAT11 is a cytochrome P450 monooxygenase, while SAT14 and SAT16 are probable acetyltransferases. The SC2 cluster may be regulated by the transcription factor SAT15. SC3 is a small cluster that encodes 5 proteins, SAT17 to SAT21. SAT21 is a putative MFS-type transporter which may have a role in exporting secondary metabolites. The four other proteins putatively encoded in SC3 include the taurine hydroxylase-like protein SAT17, the O-methyltransferase SAT18, the acetyltransferase SAT19, and the Cys6-type zinc finger SAT20, the latter being probably involved in regulation of SC3 expression. The sequence is that of MFS transporter SAT21 from Stachybotrys chartarum (strain CBS 109288 / IBT 7711) (Toxic black mold).